The chain runs to 233 residues: N-(5'-phosphoribosyl)anthranilate isomerase (233 aa).

This sequence belongs to the TrpF family.

The enzyme catalyses N-(5-phospho-beta-D-ribosyl)anthranilate = 1-(2-carboxyphenylamino)-1-deoxy-D-ribulose 5-phosphate. It functions in the pathway amino-acid biosynthesis; L-tryptophan biosynthesis; L-tryptophan from chorismate: step 3/5. In Ralstonia pickettii (strain 12J), this protein is N-(5'-phosphoribosyl)anthranilate isomerase.